The primary structure comprises 176 residues: Peptide deformylase (176 aa).

Fe cation is bound by residues Cys-94 and His-136. The active site involves Glu-137. His-140 contributes to the Fe cation binding site.

The protein belongs to the polypeptide deformylase family. It depends on Fe(2+) as a cofactor.

The enzyme catalyses N-terminal N-formyl-L-methionyl-[peptide] + H2O = N-terminal L-methionyl-[peptide] + formate. Its function is as follows. Removes the formyl group from the N-terminal Met of newly synthesized proteins. Requires at least a dipeptide for an efficient rate of reaction. N-terminal L-methionine is a prerequisite for activity but the enzyme has broad specificity at other positions. The polypeptide is Peptide deformylase (Bartonella quintana (strain Toulouse) (Rochalimaea quintana)).